Here is a 1820-residue protein sequence, read N- to C-terminus: Afadin (1820 aa).

The 95-residue stretch at 39 to 133 folds into the Ras-associating 1 domain; it reads FHGVMRFYFQ…GRFVLKNEND (95 aa). The segment at 129–196 is disordered; sequence KNENDAIPAK…PSQGDDSENS (68 aa). The stretch at 146-186 forms a coiled coil; the sequence is EKQEKEGVIQNFKRTLSKKEKKEKKKKEKEALRQASDKEER. Over residues 160–172 the composition is skewed to basic residues; it reads TLSKKEKKEKKKK. The span at 173–189 shows a compositional bias: basic and acidic residues; the sequence is EKEALRQASDKEERPSQ. Phosphoserine occurs at positions 216, 246, and 256. The Ras-associating 2 domain maps to 246–348; it reads SGGTLRIYAD…LVFQLKRRPP (103 aa). Over residues 356–371 the composition is skewed to basic and acidic residues; that stretch reads KKHVEGKSLKGKDRAD. The tract at residues 356–377 is disordered; sequence KKHVEGKSLKGKDRADGSGYGS. Phosphoserine occurs at positions 391 and 424. The FHA domain occupies 426–492; that stretch reads TEVGTEKFDD…LQSGMRLQFG (67 aa). Phosphoserine occurs at positions 512, 557, 562, 655, 1083, 1107, 1126, 1140, 1143, 1172, 1173, 1182, and 1199. The tract at residues 538–569 is disordered; it reads GDVHSGTALPASRSTTRLDSDRVSSASSTAER. The region spanning 653-908 is the Dilute domain; that stretch reads DISPTERTHK…IENVVAVAEN (256 aa). The PDZ domain occupies 1007-1093; sequence IITVTLKKQN…VVTLEVAKQG (87 aa). The interval 1107–1194 is disordered; sequence SPMMQRISDR…GKGPYTSGTA (88 aa). Positions 1113 to 1128 are enriched in basic and acidic residues; it reads ISDRRGSGKPRPKSEG. Positions 1132–1143 are enriched in polar residues; the sequence is YNNSAQNGSPES. Positions 1152-1172 are enriched in basic and acidic residues; it reads SEPKKLPGDDRLMKNRADHRS. Residues 1203 to 1222 are disordered; the sequence is GNLCTEEQSPPPRPEAYPIP. T1232 bears the Phosphothreonine mark. Disordered regions lie at residues 1235 to 1278, 1308 to 1527, and 1567 to 1716; these read ASKS…SQEE, QSSS…KQQQ, and RLQE…LKTQ. A Phosphoserine modification is found at S1238. The span at 1252 to 1262 shows a compositional bias: basic and acidic residues; it reads YEEKPHVHTES. A Phosphoserine modification is found at S1275. Residues 1309 to 1318 show a composition bias toward low complexity; sequence SSSVESSTSS. Residues 1325–1337 are compositionally biased toward polar residues; sequence SSKSVTPASTLTK. Residue S1328 is modified to Phosphoserine. A Phosphothreonine modification is found at T1330. The segment covering 1364–1373 has biased composition (pro residues); sequence LPPPPPPPPV. The span at 1407 to 1440 shows a compositional bias: basic and acidic residues; the sequence is EWKKREEHQRWYEKEKARLEEERERKRREQERKL. Residues 1410–1446 adopt a coiled-coil conformation; the sequence is KREEHQRWYEKEKARLEEERERKRREQERKLGQMRSQ. A compositionally biased stretch (polar residues) spans 1443–1457; it reads MRSQTLNPASFSPLA. The segment covering 1487–1503 has biased composition (basic and acidic residues); it reads TIERKDLQYITISKEEL. A phosphoserine mark is found at S1499 and S1510. Positions 1513–1526 are enriched in basic and acidic residues; that stretch reads PWKRDAREKLEKQQ. Residues 1523–1561 adopt a coiled-coil conformation; sequence EKQQQMHIVDMLSKEIHELQNKVDRTAEESDRLRKLMLE. Acidic residues predominate over residues 1576-1587; sequence EDDDEEEDDDVD. Residues 1593–1665 adopt a coiled-coil conformation; sequence QRLEAERRAR…SRLEAERRRQ (73 aa). Residues 1595 to 1675 show a composition bias toward basic and acidic residues; the sequence is LEAERRARMQ…HEEAARRLLE (81 aa). A phosphoserine mark is found at S1694, S1719, S1770, and S1795. Positions 1734 to 1820 are disordered; that stretch reads EEEDYGPAGP…TELENELNTK (87 aa). The segment covering 1759 to 1772 has biased composition (basic and acidic residues); it reads APREAREKLTRSQD. Over residues 1800–1820 the composition is skewed to basic and acidic residues; sequence VSDKVKASRKLTELENELNTK. Position 1803 is an N6-acetyllysine (K1803).

As to quaternary structure, homodimer. Interacts with F-actin, nectin and NECTIN3. Essential for the association of nectin and E-cadherin. Isoform 2/s-afadin does not interact with F-actin. Interacts with ZO-1 and occludin, but probably in an indirect manner. Interacts with RIT1, RIT2, NRXN1 and BCR. Interacts with ADAM10; the interaction locks ADAM10 at adherens junctions following ADAM10 recruitment to adherens junctions by TSPAN33. Isoform 1 is expressed only in a restricted set of epithelial structures during early embryogenesis.

The protein resides in the cell junction. It localises to the adherens junction. Functionally, belongs to an adhesion system, probably together with the E-cadherin-catenin system, which plays a role in the organization of homotypic, interneuronal and heterotypic cell-cell adherens junctions (AJs). Nectin- and actin-filament-binding protein that connects nectin to the actin cytoskeleton. May play a key role in the organization of epithelial structures of the embryonic ectoderm. Essential for the organization of adherens junctions. This is Afadin from Mus musculus (Mouse).